The chain runs to 236 residues: Ascorbate-specific transmembrane electron transporter 2 (236 aa).

Residues 1–13 lie on the Cytoplasmic side of the membrane; the sequence is MGLGLGVRAAPFT. The helical transmembrane segment at 14–34 threads the bilayer; sequence YAAHALAVAAAAMVLVWAIYF. Residues 15 to 219 enclose the Cytochrome b561 domain; it reads AAHALAVAAA…FGASVVVAAI (205 aa). Residues 35–50 are Extracellular-facing; the sequence is RGGLAIEATNKNLIFN. The helical transmembrane segment at 51-71 threads the bilayer; the sequence is VHPVLMLIGYIIIGGEAIMVY. Position 52 (His-52) interacts with heme b. Residue 67–75 coordinates L-ascorbate; the sequence is AIMVYRVLP. Residues 72-84 lie on the Cytoplasmic side of the membrane; that stretch reads RVLPTSNHETNKL. Residues 85-105 form a helical membrane-spanning segment; the sequence is IHLVLHGIALVLGAVGIYFAF. Residues His-86 and His-120 each contribute to the heme b site. The Extracellular segment spans residues 106-122; that stretch reads KNHNESGIANLYSLHSW. 116-125 serves as a coordination point for monodehydro-L-ascorbate radical; sequence LYSLHSWIGI. A helical transmembrane segment spans residues 123-143; that stretch reads IGIGTITLYGIQWIVGFVTFF. Residues 144 to 153 lie on the Cytoplasmic side of the membrane; the sequence is FPGAAPNVKK. The chain crosses the membrane as a helical span at residues 154 to 174; it reads GVLPWHILFGLFVYILALANA. Position 159 (His-159) interacts with heme b. At 175–201 the chain is on the extracellular side; it reads ELGFLEKLTFLESSGLDKYGTEAFLVN. Residues 202 to 222 form a helical membrane-spanning segment; it reads FTALVVVLFGASVVVAAIAPV. The Cytoplasmic portion of the chain corresponds to 223 to 236; sequence RLEEPQGYVPIPEN.

Heme b serves as cofactor.

The protein resides in the membrane. In terms of biological role, two-heme-containing cytochrome. Catalyzes ascorbate-dependent trans-membrane electron transfer by utilizing a concerted H(+)/e(-) transfer mechanism. This chain is Ascorbate-specific transmembrane electron transporter 2, found in Zea mays (Maize).